The following is a 1575-amino-acid chain: Ovochymase (1575 aa).

An N-terminal signal peptide occupies residues 1–19 (MIVTFVALALSCCTPQVTA). A Peptidase S1 1 domain is found at 36–280 (IVGGEMAKLG…YSSWIANYTQ (245 aa)). An intrachain disulfide couples C61 to C77. Active-site charge relay system residues include H76 and D132. Cystine bridges form between C166–C233, C199–C212, and C223–C256. The active-site Charge relay system is the S227. Residues N277 and N303 are each glycosylated (N-linked (GlcNAc...) asparagine). Disulfide bonds link C300/C330, C358/C386, C432/C460, and C486/C507. CUB domains follow at residues 300–423 (CSSN…FHAV) and 432–545 (CGGI…YYFS). Residues N497, N513, and N549 are each glycosylated (N-linked (GlcNAc...) asparagine). Residues 575–810 (IVNGDIAIAG…YIDWIIATAN (236 aa)) form the Peptidase S1 2 domain. C602 and C618 are joined by a disulfide. Catalysis depends on charge relay system residues H617 and D665. Cystine bridges form between C700–C766, C730–C745, and C756–C786. The N-linked (GlcNAc...) asparagine glycan is linked to N748. Residue S760 is the Charge relay system of the active site. N810 carries N-linked (GlcNAc...) asparagine glycosylation. Intrachain disulfides connect C830/C859, C889/C913, C956/C984, C1012/C1034, C1080/C1108, C1135/C1158, and C1221/C1246. 4 CUB domains span residues 830–949 (CIQL…YRLE), 956–1070 (CGQL…FVEL), 1080–1197 (CGGV…YTAV), and 1221–1341 (CQDS…YKLM). Residues N968, N1027, N1087, and N1090 are each glycosylated (N-linked (GlcNAc...) asparagine). The N-linked (GlcNAc...) asparagine glycan is linked to N1273. The Peptidase S1 3 domain occupies 1314-1575 (YNGGEISMLF…FLKWITKIIQ (262 aa)). Disulfide bonds link C1376-C1392 and C1493-C1507. N1511 carries an N-linked (GlcNAc...) asparagine glycan.

The protein belongs to the peptidase S1 family. Expressed in the testis and ovary. Expressed in the gonads and gametes. Expressed in the follicle cells covering the vitelline coat of ovarian egg.

It localises to the secreted. Its function is as follows. May be responsible for elevation of the vitelline coat at the late developmental stage of oogenesis and during fertilization in ovarian eggs. The polypeptide is Ovochymase (Halocynthia roretzi (Sea squirt)).